A 211-amino-acid chain; its full sequence is MGQKSNPIGLRLGIVGTWDSLWYAGGGYASKLHEDLLLRSFVKKTFHHAAVSRVVIARKVDAVIINIHSARPGVIIGKKGTDIDRVKQKIAQMVNHDVELHIVEVKKPDLKAALIAENIAQQLEKRVSFRRAMKRGVQNCLKLGARGVKVSCSGRLGGAEIARTEWYKEGSVPLHTFRANIDYSCAEAKTIYGIVGVKVWVYVGDSRTGGE.

The region spanning 38–106 (LRSFVKKTFH…DVELHIVEVK (69 aa)) is the KH type-2 domain.

Belongs to the universal ribosomal protein uS3 family. Part of the 30S ribosomal subunit. Forms a tight complex with proteins S10 and S14.

In terms of biological role, binds the lower part of the 30S subunit head. Binds mRNA in the 70S ribosome, positioning it for translation. The polypeptide is Small ribosomal subunit protein uS3 (Anaplasma marginale (strain Florida)).